The sequence spans 780 residues: Tyrosine-protein phosphatase non-receptor type 12 (780 aa).

Met1 carries the N-acetylmethionine modification. Ser19 bears the Phosphoserine mark. The Tyrosine-protein phosphatase domain maps to 28-293 (FARDFMRLRR…ELVHRAIAQL (266 aa)). Substrate is bound by residues Arg36, 63-67 (RYKDI), Asp199, 231-237 (CSAGCGR), and Gln278. Cys231 (phosphocysteine intermediate) is an active-site residue. Phosphoserine is present on residues Ser332, Ser435, Ser449, and Ser468. The interval 345–438 (VEGDAKEEIL…KLERNLSFEI (94 aa)) is interaction with TGFB1I1. A compositionally biased stretch (polar residues) spans 502 to 519 (QSNKVSVTPPEESQNSDT). Disordered stretches follow at residues 502–639 (QSNK…STES), 657–725 (GTTH…EKCD), and 744–780 (SDKREQISENPTEATDIGFGNRCGKPKGPRDPPSEWT). 2 positions are modified to phosphothreonine: Thr509 and Thr519. The span at 521 to 533 (PRPDRLPLDEKGH) shows a compositional bias: basic and acidic residues. Polar residues-rich tracts occupy residues 552-577 (EGNSSDINYQTRKTVSLTPSPTTQVE) and 587-601 (TSPLFRTPLSFTNPL). Ser567 is modified (phosphoserine). Thr569 carries the phosphothreonine modification. Residues Ser571 and Ser596 each carry the phosphoserine modification. Thr598 bears the Phosphothreonine mark. Basic and acidic residues predominate over residues 602 to 613 (HSDDSDSDERNS). 4 positions are modified to phosphoserine: Ser603, Ser606, Ser608, and Ser613. Low complexity predominate over residues 622 to 639 (TNISTASATVSAATSTES). Phosphoserine is present on residues Ser673 and Ser689. The segment covering 690–703 (EHNTPVRSEWSELQ) has biased composition (polar residues). Residue Thr693 is modified to Phosphothreonine. 2 stretches are compositionally biased toward basic and acidic residues: residues 704 to 725 (SQERSEQKKSEGLITSENEKCD) and 771 to 780 (GPRDPPSEWT).

This sequence belongs to the protein-tyrosine phosphatase family. Non-receptor class 4 subfamily. In terms of assembly, interacts with TGFB1I1. Interacts with PSTPIP1. Interacts with PTK2B/PYK2. Interacts with LPXN. Interacts with SORBS2; this interaction greatly enhances WASF1 dephosphorylation and might mediate partial translocation to focal adhesion sites. In terms of processing, phosphorylated by STK24/MST3 and this results in inhibition of its activity.

The protein localises to the cytoplasm. Its subcellular location is the cell junction. It is found in the focal adhesion. The protein resides in the cell projection. It localises to the podosome. The enzyme catalyses O-phospho-L-tyrosyl-[protein] + H2O = L-tyrosyl-[protein] + phosphate. Dephosphorylates a range of proteins, and thereby regulates cellular signaling cascades. Dephosphorylates cellular tyrosine kinases, such as ERBB2 and PTK2B/PYK2, and thereby regulates signaling via ERBB2 and PTK2B/PYK2. Selectively dephosphorylates ERBB2 phosphorylated at 'Tyr-1112', 'Tyr-1196', and/or 'Tyr-1248'. The chain is Tyrosine-protein phosphatase non-receptor type 12 (PTPN12) from Homo sapiens (Human).